Reading from the N-terminus, the 272-residue chain is Shikimate dehydrogenase (NADP(+)) (272 aa).

Residues Ser-14 to Ser-16 and Thr-61 contribute to the shikimate site. Catalysis depends on Lys-65, which acts as the Proton acceptor. Glu-77 is an NADP(+) binding site. Shikimate-binding residues include Asn-86 and Asp-102. Residues Gly-126–Ala-130, Asn-149–Arg-154, and Met-213 contribute to the NADP(+) site. Residue Tyr-215 participates in shikimate binding. Gly-237 is a binding site for NADP(+).

This sequence belongs to the shikimate dehydrogenase family. Homodimer.

The catalysed reaction is shikimate + NADP(+) = 3-dehydroshikimate + NADPH + H(+). Its pathway is metabolic intermediate biosynthesis; chorismate biosynthesis; chorismate from D-erythrose 4-phosphate and phosphoenolpyruvate: step 4/7. Functionally, involved in the biosynthesis of the chorismate, which leads to the biosynthesis of aromatic amino acids. Catalyzes the reversible NADPH linked reduction of 3-dehydroshikimate (DHSA) to yield shikimate (SA). The protein is Shikimate dehydrogenase (NADP(+)) of Shigella boydii serotype 4 (strain Sb227).